The sequence spans 406 residues: Putative cfxQ-like protein R730 (406 aa).

Positions 1 to 37 are disordered; it reads MKRSHDSITRSINSDNDSETNMNSDNNNNNKPNQRKK. Residues 13–32 are compositionally biased toward low complexity; sequence NSDNDSETNMNSDNNNNNKP. 173 to 180 lines the ATP pocket; that stretch reads GPPGVGKS.

The protein belongs to the CbxX/CfxQ family.

The chain is Putative cfxQ-like protein R730 from Acanthamoeba polyphaga mimivirus (APMV).